The sequence spans 108 residues: UPF0145 protein LCABL_07110 (108 aa).

The protein belongs to the UPF0145 family.

This Lacticaseibacillus casei (strain BL23) (Lactobacillus casei) protein is UPF0145 protein LCABL_07110.